The primary structure comprises 93 residues: Large ribosomal subunit protein uL23cz/uL23cy (93 aa).

This sequence belongs to the universal ribosomal protein uL23 family. In terms of assembly, part of the 50S ribosomal subunit.

It localises to the plastid. Its subcellular location is the chloroplast. Functionally, binds to 23S rRNA. This is Large ribosomal subunit protein uL23cz/uL23cy (rpl23-A) from Piper cenocladum (Ant piper).